Here is a 159-residue protein sequence, read N- to C-terminus: Ribosomal RNA large subunit methyltransferase H (159 aa).

S-adenosyl-L-methionine contacts are provided by residues Leu76, Gly108, and 127 to 132; that span reads FSKMTF.

This sequence belongs to the RNA methyltransferase RlmH family. In terms of assembly, homodimer.

It is found in the cytoplasm. It catalyses the reaction pseudouridine(1915) in 23S rRNA + S-adenosyl-L-methionine = N(3)-methylpseudouridine(1915) in 23S rRNA + S-adenosyl-L-homocysteine + H(+). In terms of biological role, specifically methylates the pseudouridine at position 1915 (m3Psi1915) in 23S rRNA. This is Ribosomal RNA large subunit methyltransferase H from Staphylococcus aureus (strain MSSA476).